Reading from the N-terminus, the 1392-residue chain is DNA-directed RNA polymerase subunit beta'' (1392 aa).

Zn(2+)-binding residues include cysteine 224, cysteine 295, cysteine 302, and cysteine 305.

This sequence belongs to the RNA polymerase beta' chain family. RpoC2 subfamily. As to quaternary structure, in plastids the minimal PEP RNA polymerase catalytic core is composed of four subunits: alpha, beta, beta', and beta''. When a (nuclear-encoded) sigma factor is associated with the core the holoenzyme is formed, which can initiate transcription. The cofactor is Zn(2+).

The protein resides in the plastid. It is found in the chloroplast. It catalyses the reaction RNA(n) + a ribonucleoside 5'-triphosphate = RNA(n+1) + diphosphate. In terms of biological role, DNA-dependent RNA polymerase catalyzes the transcription of DNA into RNA using the four ribonucleoside triphosphates as substrates. This chain is DNA-directed RNA polymerase subunit beta'', found in Eucalyptus globulus subsp. globulus (Tasmanian blue gum).